The following is a 244-amino-acid chain: Pyridoxine 5'-phosphate synthase (244 aa).

Asn-7 provides a ligand contact to 3-amino-2-oxopropyl phosphate. 9-10 (DH) serves as a coordination point for 1-deoxy-D-xylulose 5-phosphate. A 3-amino-2-oxopropyl phosphate-binding site is contributed by Arg-18. The Proton acceptor role is filled by His-43. 1-deoxy-D-xylulose 5-phosphate contacts are provided by Arg-45 and His-50. The Proton acceptor role is filled by Glu-70. Thr-100 contacts 1-deoxy-D-xylulose 5-phosphate. The Proton donor role is filled by His-191. 3-amino-2-oxopropyl phosphate-binding positions include Gly-192 and 213–214 (GH).

The protein belongs to the PNP synthase family. As to quaternary structure, homooctamer; tetramer of dimers.

It localises to the cytoplasm. The catalysed reaction is 3-amino-2-oxopropyl phosphate + 1-deoxy-D-xylulose 5-phosphate = pyridoxine 5'-phosphate + phosphate + 2 H2O + H(+). It functions in the pathway cofactor biosynthesis; pyridoxine 5'-phosphate biosynthesis; pyridoxine 5'-phosphate from D-erythrose 4-phosphate: step 5/5. Catalyzes the complicated ring closure reaction between the two acyclic compounds 1-deoxy-D-xylulose-5-phosphate (DXP) and 3-amino-2-oxopropyl phosphate (1-amino-acetone-3-phosphate or AAP) to form pyridoxine 5'-phosphate (PNP) and inorganic phosphate. The polypeptide is Pyridoxine 5'-phosphate synthase (Laribacter hongkongensis (strain HLHK9)).